A 20-amino-acid chain; its full sequence is Hemocyanin subunit 6 (20 aa).

Belongs to the tyrosinase family. Hemocyanin subfamily. In terms of tissue distribution, hemolymph.

The protein resides in the secreted. It is found in the extracellular space. In terms of biological role, hemocyanins are copper-containing oxygen carriers occurring freely dissolved in the hemolymph of many mollusks and arthropods. The polypeptide is Hemocyanin subunit 6 (Homarus americanus (American lobster)).